The primary structure comprises 353 residues: MTIALGKLTKDEKDLFDTMDDWLRRDRFIFVGWSGLLLFPCAYFALGGWFTGTTFVTSWYTHGLASSYLEGCNFLTAAVSTPANSLAHSLLFLWGPEAQGDFTRWCQLGGLWTFVALHGAFGLIGFMLRQFELARSVQLRPYNAIAFSAPIAVFISVFFIYPLGQSGWFFAPSFGVAAIFRFILFFQGFHNWTLNPFHMMGVAGVLGAALLCAIHGATVENTLFEDGDGANTFRAFNPTQSEETYSMVTANRFWSQIFGVAFSNKRWLHFFMLFVPVTGLWMSALGVVGLALNLRAYDFVSQEIRAAEDPEFETFYTKNILLNEGIRAWMAAQDQPHENLIFPEEVLPRGNAL.

Residue threonine 2 is modified to N-acetylthreonine. Position 2 is a phosphothreonine (threonine 2). The helical transmembrane segment at 41 to 61 threads the bilayer; that stretch reads CAYFALGGWFTGTTFVTSWYT. Position 118 (histidine 118) interacts with chlorophyll a. Residues 125-141 traverse the membrane as a helical segment; that stretch reads GFMLRQFELARSVQLRP. Positions 130 and 143 each coordinate pheophytin a. The chain crosses the membrane as a helical span at residues 153 to 166; sequence VFISVFFIYPLGQS. Histidine 198 is a chlorophyll a binding site. Residues 208 to 228 traverse the membrane as a helical segment; it reads AALLCAIHGATVENTLFEDGD. Positions 215 and 262 each coordinate a plastoquinone. Histidine 215 is a Fe cation binding site. Histidine 269 lines the Fe cation pocket. Residues 279–295 form a helical membrane-spanning segment; the sequence is GLWMSALGVVGLALNLR.

It belongs to the reaction center PufL/M/PsbA/D family. As to quaternary structure, PSII is composed of 1 copy each of membrane proteins PsbA, PsbB, PsbC, PsbD, PsbE, PsbF, PsbH, PsbI, PsbJ, PsbK, PsbL, PsbM, PsbT, PsbX, PsbY, PsbZ, Psb30/Ycf12, at least 3 peripheral proteins of the oxygen-evolving complex and a large number of cofactors. It forms dimeric complexes. The D1/D2 heterodimer binds P680, chlorophylls that are the primary electron donor of PSII, and subsequent electron acceptors. It shares a non-heme iron and each subunit binds pheophytin, quinone, additional chlorophylls, carotenoids and lipids. There is also a Cl(-1) ion associated with D1 and D2, which is required for oxygen evolution. The PSII complex binds additional chlorophylls, carotenoids and specific lipids. serves as cofactor.

The protein resides in the plastid membrane. It carries out the reaction 2 a plastoquinone + 4 hnu + 2 H2O = 2 a plastoquinol + O2. Functionally, photosystem II (PSII) is a light-driven water:plastoquinone oxidoreductase that uses light energy to abstract electrons from H(2)O, generating O(2) and a proton gradient subsequently used for ATP formation. It consists of a core antenna complex that captures photons, and an electron transfer chain that converts photonic excitation into a charge separation. The D1/D2 (PsbA/PsbD) reaction center heterodimer binds P680, the primary electron donor of PSII as well as several subsequent electron acceptors. D2 is needed for assembly of a stable PSII complex. This Cuscuta reflexa (Southern Asian dodder) protein is Photosystem II D2 protein.